Here is a 220-residue protein sequence, read N- to C-terminus: ATP-dependent Clp protease proteolytic subunit (220 aa).

Ser122 (nucleophile) is an active-site residue. Residue His147 is part of the active site.

The protein belongs to the peptidase S14 family. As to quaternary structure, fourteen ClpP subunits assemble into 2 heptameric rings which stack back to back to give a disk-like structure with a central cavity, resembling the structure of eukaryotic proteasomes.

Its subcellular location is the cytoplasm. The enzyme catalyses Hydrolysis of proteins to small peptides in the presence of ATP and magnesium. alpha-casein is the usual test substrate. In the absence of ATP, only oligopeptides shorter than five residues are hydrolyzed (such as succinyl-Leu-Tyr-|-NHMec, and Leu-Tyr-Leu-|-Tyr-Trp, in which cleavage of the -Tyr-|-Leu- and -Tyr-|-Trp bonds also occurs).. Functionally, cleaves peptides in various proteins in a process that requires ATP hydrolysis. Has a chymotrypsin-like activity. Plays a major role in the degradation of misfolded proteins. The chain is ATP-dependent Clp protease proteolytic subunit from Colwellia psychrerythraea (strain 34H / ATCC BAA-681) (Vibrio psychroerythus).